The sequence spans 61 residues: Small ribosomal subunit protein uS14 (61 aa).

Residues Cys24, Cys27, Cys40, and Cys43 each coordinate Zn(2+).

The protein belongs to the universal ribosomal protein uS14 family. Zinc-binding uS14 subfamily. As to quaternary structure, part of the 30S ribosomal subunit. Contacts proteins S3 and S10. Zn(2+) is required as a cofactor.

Binds 16S rRNA, required for the assembly of 30S particles and may also be responsible for determining the conformation of the 16S rRNA at the A site. The sequence is that of Small ribosomal subunit protein uS14 from Mesomycoplasma hyopneumoniae (strain 232) (Mycoplasma hyopneumoniae).